We begin with the raw amino-acid sequence, 252 residues long: Aspartate/glutamate leucyltransferase (252 aa).

This sequence belongs to the R-transferase family. Bpt subfamily.

It localises to the cytoplasm. It catalyses the reaction N-terminal L-glutamyl-[protein] + L-leucyl-tRNA(Leu) = N-terminal L-leucyl-L-glutamyl-[protein] + tRNA(Leu) + H(+). The catalysed reaction is N-terminal L-aspartyl-[protein] + L-leucyl-tRNA(Leu) = N-terminal L-leucyl-L-aspartyl-[protein] + tRNA(Leu) + H(+). Functions in the N-end rule pathway of protein degradation where it conjugates Leu from its aminoacyl-tRNA to the N-termini of proteins containing an N-terminal aspartate or glutamate. The polypeptide is Aspartate/glutamate leucyltransferase (Afipia carboxidovorans (strain ATCC 49405 / DSM 1227 / KCTC 32145 / OM5) (Oligotropha carboxidovorans)).